We begin with the raw amino-acid sequence, 438 residues long: UDP-N-acetylmuramoylalanine--D-glutamate ligase (438 aa).

Gly-112 to Thr-118 contacts ATP.

It belongs to the MurCDEF family.

The protein resides in the cytoplasm. The catalysed reaction is UDP-N-acetyl-alpha-D-muramoyl-L-alanine + D-glutamate + ATP = UDP-N-acetyl-alpha-D-muramoyl-L-alanyl-D-glutamate + ADP + phosphate + H(+). Its pathway is cell wall biogenesis; peptidoglycan biosynthesis. Cell wall formation. Catalyzes the addition of glutamate to the nucleotide precursor UDP-N-acetylmuramoyl-L-alanine (UMA). The chain is UDP-N-acetylmuramoylalanine--D-glutamate ligase from Yersinia pseudotuberculosis serotype I (strain IP32953).